An 84-amino-acid polypeptide reads, in one-letter code: Kunitz-type neurotoxin MitTx-alpha (84 aa).

The signal sequence occupies residues 1–24 (MSSGGLLLLLGLLTLCAELTPVSS). A Pyrrolidone carboxylic acid modification is found at Q25. Residues 31 to 82 (CYEDPPFFQKCGAFVDSYYFNRSRITCVHFFYGQCDVNQNHFTTMSECNRVC) enclose the BPTI/Kunitz inhibitor domain. Intrachain disulfides connect C31–C82, C41–C65, and C57–C78.

This sequence belongs to the venom Kunitz-type family. In terms of assembly, heterodimer of an alpha (Kunitz-type) and a beta (phospholipase A2 homolog) chains; non-covalently-linked. In terms of tissue distribution, expressed by the venom gland.

It localises to the secreted. Functionally, mitTx, a heteromeric complex between Kunitz- and phospholipase-A2-like proteins, potently, persistently and selectively activates rat and chicken acid-sensing ion channel ASIC1. Both alternatively spliced rat isoforms ASIC1a and ASIC1b are activated, with a higher potency for ASIC1a (EC(50)=9.4 nM) vs ASIC1b (EC(50)=23 nM). The rat ASIC3 subtype is also sensitive to the heterodimer, but with a lower potency (EC(50)=830 nM). On rat ASIC2a, the toxin shows a very weak activation, but produces a remarkable potentiation (&gt;100-fold) of protons when the extracellular pH drops below neutrality. Moderate and weak activations are also observed on the heterotrimers Asic1a-Asic2a and Asic1a-Asic3 (expressed in CHO cells), respectively. The binding sites of the beta subunit of MitTx and the spider psalmotoxin-1 overlap, explaining why these toxins are mutually exclusive. In vivo, the heterodimer elicits robust pain-related behavior in mice by activation of ASIC1 channels on capsaicin-sensitive nerve fibers. The chain is Kunitz-type neurotoxin MitTx-alpha from Micrurus tener tener (Texas coral snake).